The primary structure comprises 194 residues: NADH-quinone oxidoreductase subunit B (194 aa).

Residues Cys72, Cys73, Cys137, and Cys167 each coordinate [4Fe-4S] cluster.

It belongs to the complex I 20 kDa subunit family. In terms of assembly, NDH-1 is composed of 14 different subunits. Subunits NuoB, C, D, E, F, and G constitute the peripheral sector of the complex. [4Fe-4S] cluster serves as cofactor.

The protein resides in the cell inner membrane. It carries out the reaction a quinone + NADH + 5 H(+)(in) = a quinol + NAD(+) + 4 H(+)(out). In terms of biological role, NDH-1 shuttles electrons from NADH, via FMN and iron-sulfur (Fe-S) centers, to quinones in the respiratory chain. Couples the redox reaction to proton translocation (for every two electrons transferred, four hydrogen ions are translocated across the cytoplasmic membrane), and thus conserves the redox energy in a proton gradient. This Granulibacter bethesdensis (strain ATCC BAA-1260 / CGDNIH1) protein is NADH-quinone oxidoreductase subunit B.